The sequence spans 212 residues: Redox-sensing transcriptional repressor Rex (212 aa).

A DNA-binding region (H-T-H motif) is located at residues 17-56 (LYARSLRYLLEEGVHSVSSQELGERINVTAAQIRKDLSYF). Position 91-96 (91-96 (GIGLLG)) interacts with NAD(+).

It belongs to the transcriptional regulatory Rex family. As to quaternary structure, homodimer.

The protein resides in the cytoplasm. In terms of biological role, modulates transcription in response to changes in cellular NADH/NAD(+) redox state. The protein is Redox-sensing transcriptional repressor Rex of Chloroflexus aurantiacus (strain ATCC 29366 / DSM 635 / J-10-fl).